We begin with the raw amino-acid sequence, 148 residues long: Small ribosomal subunit protein uS9 (148 aa).

The protein belongs to the universal ribosomal protein uS9 family.

The polypeptide is Small ribosomal subunit protein uS9 (RpS16) (Aedes aegypti (Yellowfever mosquito)).